We begin with the raw amino-acid sequence, 700 residues long: Methionine--tRNA ligase (700 aa).

Positions 14–24 match the 'HIGH' region motif; sequence PYANGPVHLGH. Residues Cys-146, Cys-149, Cys-159, and Cys-162 each contribute to the Zn(2+) site. Residues 343–347 carry the 'KMSKS' region motif; sequence KFSKS. Lys-346 provides a ligand contact to ATP. Positions 599–700 constitute a tRNA-binding domain; sequence EFEKIDLRVA…GDSIVGKPVK (102 aa).

It belongs to the class-I aminoacyl-tRNA synthetase family. MetG type 1 subfamily. As to quaternary structure, homodimer. The cofactor is Zn(2+).

It localises to the cytoplasm. It catalyses the reaction tRNA(Met) + L-methionine + ATP = L-methionyl-tRNA(Met) + AMP + diphosphate. In terms of biological role, is required not only for elongation of protein synthesis but also for the initiation of all mRNA translation through initiator tRNA(fMet) aminoacylation. The protein is Methionine--tRNA ligase of Chloroherpeton thalassium (strain ATCC 35110 / GB-78).